The chain runs to 347 residues: Transcription termination/antitermination protein NusA (347 aa).

The region spanning 112–184 (GEIVAGVIQR…REPLITLSRT (73 aa)) is the S1 motif domain. In terms of domain architecture, KH spans 287–347 (ARAARVVVPD…GVSRGMAHDR (61 aa)). The disordered stretch occupies residues 322-347 (DIRGDAPPPPPGQPEPGVSRGMAHDR).

Belongs to the NusA family. Monomer. Binds directly to the core enzyme of the DNA-dependent RNA polymerase and to nascent RNA.

The protein localises to the cytoplasm. Participates in both transcription termination and antitermination. The protein is Transcription termination/antitermination protein NusA of Mycobacterium bovis (strain ATCC BAA-935 / AF2122/97).